Reading from the N-terminus, the 251-residue chain is Hydroxyacylglutathione hydrolase (251 aa).

His53, His55, Asp57, His58, His110, Asp127, and His165 together coordinate Zn(2+).

It belongs to the metallo-beta-lactamase superfamily. Glyoxalase II family. As to quaternary structure, monomer. Requires Zn(2+) as cofactor.

The catalysed reaction is an S-(2-hydroxyacyl)glutathione + H2O = a 2-hydroxy carboxylate + glutathione + H(+). Its pathway is secondary metabolite metabolism; methylglyoxal degradation; (R)-lactate from methylglyoxal: step 2/2. Its function is as follows. Thiolesterase that catalyzes the hydrolysis of S-D-lactoyl-glutathione to form glutathione and D-lactic acid. This is Hydroxyacylglutathione hydrolase from Citrobacter koseri (strain ATCC BAA-895 / CDC 4225-83 / SGSC4696).